Consider the following 250-residue polypeptide: Probable aquaporin TIP1-1 (250 aa).

A run of 2 helical transmembrane segments spans residues 25–44 and 58–77; these read AEFI…GMAF and LIAA…SVGA. Residues 85–87 carry the NPA 1 motif; that stretch reads NPA. The next 3 membrane-spanning stretches (helical) occupy residues 103–121, 144–163, and 170–192; these read GLLY…CFLL, LVLE…ATAV, and LGTI…GGAF. Residues 198 to 200 carry the NPA 2 motif; the sequence is NPA. A helical membrane pass occupies residues 216 to 233; the sequence is WVYWVGPLIGGGLAGVIY.

This sequence belongs to the MIP/aquaporin (TC 1.A.8) family. TIP (TC 1.A.8.10) subfamily. In terms of tissue distribution, expressed in roots and leaves.

Its subcellular location is the vacuole membrane. Aquaporins facilitate the transport of water and small neutral solutes across cell membranes. May be involved in transport from the vacuolar compartment to the cytoplasm. The protein is Probable aquaporin TIP1-1 (TIP1-1) of Oryza sativa subsp. japonica (Rice).